Consider the following 189-residue polypeptide: Sec-independent protein translocase protein TatB (189 aa).

The helical transmembrane segment at 1–21 (MFGVGIFEVLVILIVAVIALG) threads the bilayer. The interval 152–189 (TQKPQNSIDSINSKESSVDSLHSPSIVESTQSSSSKDS) is disordered. The span at 153-189 (QKPQNSIDSINSKESSVDSLHSPSIVESTQSSSSKDS) shows a compositional bias: polar residues.

The protein belongs to the TatB family. The Tat system comprises two distinct complexes: a TatABC complex, containing multiple copies of TatA, TatB and TatC subunits, and a separate TatA complex, containing only TatA subunits. Substrates initially bind to the TatABC complex, which probably triggers association of the separate TatA complex to form the active translocon.

Its subcellular location is the cell inner membrane. Part of the twin-arginine translocation (Tat) system that transports large folded proteins containing a characteristic twin-arginine motif in their signal peptide across membranes. Together with TatC, TatB is part of a receptor directly interacting with Tat signal peptides. TatB may form an oligomeric binding site that transiently accommodates folded Tat precursor proteins before their translocation. This is Sec-independent protein translocase protein TatB from Helicobacter hepaticus (strain ATCC 51449 / 3B1).